The primary structure comprises 393 residues: Phosphoglycerate kinase (393 aa).

Residues 22–24 (DFN), arginine 37, 60–63 (HLGR), arginine 119, and arginine 152 each bind substrate. ATP is bound by residues lysine 202, glycine 293, glutamate 324, and 350 to 353 (GGDS).

Belongs to the phosphoglycerate kinase family. As to quaternary structure, monomer.

The protein resides in the cytoplasm. The enzyme catalyses (2R)-3-phosphoglycerate + ATP = (2R)-3-phospho-glyceroyl phosphate + ADP. It functions in the pathway carbohydrate degradation; glycolysis; pyruvate from D-glyceraldehyde 3-phosphate: step 2/5. In Borreliella afzelii (strain PKo) (Borrelia afzelii), this protein is Phosphoglycerate kinase.